Consider the following 425-residue polypeptide: Glutamyl-tRNA reductase (425 aa).

Substrate-binding positions include 47–50 (TCNR), serine 107, 112–114 (EDQ), and glutamine 118. Catalysis depends on cysteine 48, which acts as the Nucleophile. 187 to 192 (GAGHMA) contacts NADP(+).

The protein belongs to the glutamyl-tRNA reductase family. Homodimer.

The enzyme catalyses (S)-4-amino-5-oxopentanoate + tRNA(Glu) + NADP(+) = L-glutamyl-tRNA(Glu) + NADPH + H(+). Its pathway is porphyrin-containing compound metabolism; protoporphyrin-IX biosynthesis; 5-aminolevulinate from L-glutamyl-tRNA(Glu): step 1/2. It participates in porphyrin-containing compound metabolism; chlorophyll biosynthesis. Functionally, catalyzes the NADPH-dependent reduction of glutamyl-tRNA(Glu) to glutamate 1-semialdehyde (GSA). This chain is Glutamyl-tRNA reductase, found in Roseiflexus castenholzii (strain DSM 13941 / HLO8).